The chain runs to 371 residues: Aspartate-semialdehyde dehydrogenase (371 aa).

NADP(+) contacts are provided by residues 9–12, 37–38, and glutamine 73; these read RGMV and TS. Arginine 102 contributes to the phosphate binding site. The active-site Acyl-thioester intermediate is the cysteine 135. A substrate-binding site is contributed by glutamine 162. NADP(+) is bound by residues 165-166 and proline 193; that span reads SG. Residue glutamate 241 coordinates substrate. Lysine 244 contributes to the phosphate binding site. Arginine 268 contacts substrate. The Proton acceptor role is filled by histidine 275. NADP(+) is bound at residue glutamine 351.

It belongs to the aspartate-semialdehyde dehydrogenase family. Homodimer.

It carries out the reaction L-aspartate 4-semialdehyde + phosphate + NADP(+) = 4-phospho-L-aspartate + NADPH + H(+). It functions in the pathway amino-acid biosynthesis; L-lysine biosynthesis via DAP pathway; (S)-tetrahydrodipicolinate from L-aspartate: step 2/4. Its pathway is amino-acid biosynthesis; L-methionine biosynthesis via de novo pathway; L-homoserine from L-aspartate: step 2/3. It participates in amino-acid biosynthesis; L-threonine biosynthesis; L-threonine from L-aspartate: step 2/5. Its function is as follows. Catalyzes the NADPH-dependent formation of L-aspartate-semialdehyde (L-ASA) by the reductive dephosphorylation of L-aspartyl-4-phosphate. This is Aspartate-semialdehyde dehydrogenase from Neisseria meningitidis serogroup A / serotype 4A (strain DSM 15465 / Z2491).